A 517-amino-acid polypeptide reads, in one-letter code: Cytochrome P450 monooxygenase sdnE (517 aa).

Residues 4–24 (SSILQTLAVLYVLYLLGLIIY) form a helical membrane-spanning segment. Residue asparagine 111 is glycosylated (N-linked (GlcNAc...) asparagine). Residues 219–239 (FPVVFIILGLSPRAMLKLVVP) form a helical membrane-spanning segment. Heme is bound at residue cysteine 456.

It belongs to the cytochrome P450 family. Heme serves as cofactor.

It localises to the membrane. It participates in antibiotic biosynthesis. Functionally, cytochrome P450 monooxygenase; part of the gene cluster that mediates the biosynthesis of sordarin and hypoxysordarin, glycoside antibiotics with a unique tetracyclic diterpene aglycone structure. First, the geranylgeranyl diphosphate synthase sdnC constructs GGDP from farnesyl diphosphate and isopentenyl diphosphate. The diterpene cyclase sdnA then catalyzes the cyclization of GGDP to afford cycloaraneosene. Cycloaraneosene is then hydroxylated four times by the putative cytochrome P450 monooxygenases sdnB, sdnE, sdnF and sdnH to give a hydroxylated cycloaraneosene derivative such as cycloaraneosene-8,9,13,19-tetraol. Although the order of the hydroxylations is unclear, at least C8, C9 and C13 of the cycloaraneosene skeleton are hydroxylated before the sordaricin formation. Dehydration of the 13-hydroxy group of the hydroxylated cycloaraneosene derivative might be catalyzed by an unassigned hypothetical protein such as sdnG and sdnP to construct the cyclopentadiene moiety. The FAD-dependent oxidoreductase sdnN is proposed to catalyze the oxidation at C9 of the hydroxylated cycloaraneosene derivative and also catalyze the Baeyer-Villiger oxidation to give the lactone intermediate. The presumed lactone intermediate would be hydrolyzed to give an acrolein moiety and a carboxylate moiety. Then, [4+2]cycloaddition would occur between the acrolein moiety and the cyclopentadiene moiety to give sordaricin. SdnN might also be involved in the [4+2]cycloaddition after the hypothesized oxidation to accommodate the oxidized product and prompt the [4+2]cycloaddition. GDP-6-deoxy-D-altrose may be biosynthesized from GDP-D-mannose by the putative GDP-mannose-4,6-dehydratase sdnI and the short-chain dehydrogenase sdnK. The glycosyltransferase sdnJ catalyzes the attachment of 6-deoxy-D-altrose onto the 19-hydroxy group of sordaricin to give 4'-O-demethylsordarin. The methyltransferase sdnD would complete the biosynthesis of sordarin. Sordarin can be further modified into hypoxysordarin. The unique acyl chain at the 3'-hydroxy group of hypoxysordarin would be constructed by an iterative type I PKS sdnO and the trans-acting polyketide methyltransferase sdnL. SdnL would be responsible for the introduction of an alpha-methyl group of the polyketide chain. Alternatively, the beta-lactamase-like protein sdnR might be responsible for the cleavage and transfer of the polyketide chain from the PKS sdnO to sordarin. Two putative cytochrome P450 monooxygenases, sdnQ and sdnT, might catalyze the epoxidations of the polyketide chain to complete the biosynthesis of hypoxysordarin. Transcriptional regulators sdnM and sdnS are presumably encoded for the transcriptional regulation of the expression of the sdn gene cluster. The polypeptide is Cytochrome P450 monooxygenase sdnE (Sordaria araneosa (Pleurage araneosa)).